A 420-amino-acid polypeptide reads, in one-letter code: MGICCSKGKEELEEEGFPWKHDAFFHDQLWSAGVSMHTKQGWKGANQDAMTTCQDFAGHKGQIFCGVFDGHGPLGREVARHVRDVLPVKLSSSLALKTEQDPSSNTDKETLEKSDCTSLSDTSNEKQLLSTWKNIFVKTFEDVDEDLRQHSGIDCICSGTTAVTVVRQGDHLIIANLGDSRAVLCTRDSKDRPISVQLTTDLKPNLPSEAERILNSKGRVFAMDDEPDVPRMWLPDQDAPGLAMARAFGDFCLKSHGLICTPEVYYRKLSAKDDFLVLATDGIWDVLSNKEVIKIVSSATDHSKAAKQLVERAVRTWRRKFPTSMVDDCAVVCLFLKPSPSSSESTPGDAKPPQAVSFTGSFRKVLGGGGGEAEEGTNVWRALEGVARVNSVVRLPRMGAVLSWRRRSTSLEEDDEARID.

A PPM-type phosphatase domain is found at 33–336; the sequence is GVSMHTKQGW…DDCAVVCLFL (304 aa). Mn(2+) is bound by residues Asp69 and Gly70. Polar residues predominate over residues 96 to 105; that stretch reads LKTEQDPSSN. The segment at 96-119 is disordered; it reads LKTEQDPSSNTDKETLEKSDCTSL. The span at 106-115 shows a compositional bias: basic and acidic residues; that stretch reads TDKETLEKSD. Mn(2+) is bound by residues Asp281 and Asp327.

This sequence belongs to the PP2C family. The cofactor is Mg(2+). Mn(2+) serves as cofactor.

The enzyme catalyses O-phospho-L-seryl-[protein] + H2O = L-seryl-[protein] + phosphate. It carries out the reaction O-phospho-L-threonyl-[protein] + H2O = L-threonyl-[protein] + phosphate. The polypeptide is Probable protein phosphatase 2C 73 (Oryza sativa subsp. japonica (Rice)).